A 307-amino-acid chain; its full sequence is Ribosomal protein L11 methyltransferase (307 aa).

Residues Thr-156, Gly-177, Asp-199, and Asn-243 each coordinate S-adenosyl-L-methionine.

It belongs to the methyltransferase superfamily. PrmA family.

Its subcellular location is the cytoplasm. The catalysed reaction is L-lysyl-[protein] + 3 S-adenosyl-L-methionine = N(6),N(6),N(6)-trimethyl-L-lysyl-[protein] + 3 S-adenosyl-L-homocysteine + 3 H(+). In terms of biological role, methylates ribosomal protein L11. The protein is Ribosomal protein L11 methyltransferase of Syntrophomonas wolfei subsp. wolfei (strain DSM 2245B / Goettingen).